Consider the following 945-residue polypeptide: Xylosyltransferase 1 (945 aa).

The Cytoplasmic portion of the chain corresponds to 1 to 17 (MQAAPCARRLARRSHSA). Residues 18 to 38 (LLAALTVLLLQTLVVWNFSSL) traverse the membrane as a helical; Signal-anchor for type II membrane protein segment. The Lumenal portion of the chain corresponds to 39-945 (DSGAGERRGG…GAVKPDGRLR (907 aa)). The tract at residues 42-245 (AGERRGGAAV…KYDQPPKCDI (204 aa)) is disordered. Gly residues predominate over residues 76–103 (RGGGGGGGGCGGGGRGPQARARGGGPGE). Residues 131-147 (KVRTDSNNENSVPKDFE) are compositionally biased toward basic and acidic residues. The span at 149 to 158 (VDNSNFAPRT) shows a compositional bias: polar residues. The span at 163–190 (HQPELAKKPPSRQKELLKRKLEQQEKGK) shows a compositional bias: basic and acidic residues. N-linked (GlcNAc...) asparagine glycosylation occurs at N212. Residues 235–245 (TKYDQPPKCDI) are compositionally biased toward basic and acidic residues. 4 cysteine pairs are disulfide-bonded: C243–C271, C287–C528, C547–C560, and C549–C558. UDP-alpha-D-xylose-binding positions include V319, D347, and 376–378 (TIW). An N-linked (GlcNAc...) asparagine glycan is attached at N407. A UDP-alpha-D-xylose-binding site is contributed by 480 to 481 (DW). UDP-alpha-D-xylose-binding positions include S561 and 584-585 (RK). 2 cysteine pairs are disulfide-bonded: C661–C913 and C906–C919. A glycan (N-linked (GlcNAc...) asparagine) is linked at N763. Residues 926 to 945 (SFSPDPKSELGAVKPDGRLR) form a disordered region.

It belongs to the glycosyltransferase 14 family. XylT subfamily. As to quaternary structure, monomer. A divalent metal cation is required as a cofactor. Contains 7 disulfide bonds. In terms of processing, N-glycosylated.

Its subcellular location is the golgi apparatus membrane. The enzyme catalyses UDP-alpha-D-xylose + L-seryl-[protein] = 3-O-(beta-D-xylosyl)-L-seryl-[protein] + UDP + H(+). Its pathway is glycan metabolism; chondroitin sulfate biosynthesis. It participates in glycan metabolism; heparan sulfate biosynthesis. In terms of biological role, catalyzes the first step in the biosynthesis of chondroitin sulfate and dermatan sulfate proteoglycans, such as DCN. Transfers D-xylose from UDP-D-xylose to specific serine residues of the core protein. Required for normal maturation of chondrocytes during bone development, normal onset of ossification and normal embryonic and postnatal skeleton development, especially of the long bones. This Pan troglodytes (Chimpanzee) protein is Xylosyltransferase 1 (XYLT1).